Here is a 567-residue protein sequence, read N- to C-terminus: Diphtheria toxin (567 aa).

The signal sequence occupies residues Met-1–Ala-32. NAD(+) contacts are provided by His-53 and Tyr-97. Glu-180 is an active-site residue. Intrachain disulfides connect Cys-218–Cys-233 and Cys-493–Cys-503.

As to quaternary structure, homodimer. Post-translationally, proteolytic activation by host furin cleaves the protein in two parts, Diphtheria toxin fragment A and Diphtheria toxin fragment B; which remain associated via a disulfide bond.

It catalyses the reaction diphthamide-[translation elongation factor 2] + NAD(+) = N-(ADP-D-ribosyl)diphthamide-[translation elongation factor 2] + nicotinamide + H(+). Its activity is regulated as follows. Partially inhibited by 1,8-naphthalimide (NAP). In terms of biological role, diphtheria toxin, produced by a phage infecting Corynebacterium diphtheriae, is a proenzyme that, after activation, catalyzes the covalent attachment of the ADP ribose moiety of NAD to eukaryotic elongation factor 2 (eEF-2). Fragment A is the catalytic portion responsible for enzymatic ADP-ribosylation of elongation factor 2, while fragment B is responsible for binding of toxin to cell receptors and entry of fragment A. This is Diphtheria toxin from Corynebacterium diphtheriae.